Here is a 148-residue protein sequence, read N- to C-terminus: Flavodoxin (148 aa).

One can recognise a Flavodoxin-like domain in the interval Val-4 to Leu-145.

It belongs to the flavodoxin family. It depends on FMN as a cofactor.

Low-potential electron donor to a number of redox enzymes. The protein is Flavodoxin of Desulfovibrio desulfuricans (strain ATCC 27774 / DSM 6949 / MB).